Reading from the N-terminus, the 94-residue chain is MLKMNLQFFASKKGVGSTKNGRDSISKRLGTKRADGQLVTGGSILVRQRGTRIYPGVNVGKGGDDTLFAKVDGVVKFERVGRDRKQVSVYPKAQ.

The propeptide occupies 1 to 9 (MLKMNLQFF).

The protein belongs to the bacterial ribosomal protein bL27 family. In terms of processing, the N-terminus is cleaved by ribosomal processing cysteine protease Prp.

This Halalkalibacterium halodurans (strain ATCC BAA-125 / DSM 18197 / FERM 7344 / JCM 9153 / C-125) (Bacillus halodurans) protein is Large ribosomal subunit protein bL27.